The sequence spans 149 residues: Transcriptional repressor NrdR (149 aa).

The segment at 3 to 34 (CPFCGNRDTNVRDSRSVNEGTFIKRRRFCGEC) is a zinc-finger region. The ATP-cone domain maps to 49-139 (IKVIKKNGSC…VYMNFENEKD (91 aa)).

Belongs to the NrdR family. The cofactor is Zn(2+).

Functionally, negatively regulates transcription of bacterial ribonucleotide reductase nrd genes and operons by binding to NrdR-boxes. The sequence is that of Transcriptional repressor NrdR from Neorickettsia sennetsu (strain ATCC VR-367 / Miyayama) (Ehrlichia sennetsu).